We begin with the raw amino-acid sequence, 290 residues long: 33 kDa chaperonin (290 aa).

2 cysteine pairs are disulfide-bonded: Cys235/Cys237 and Cys268/Cys271.

It belongs to the HSP33 family. Post-translationally, under oxidizing conditions two disulfide bonds are formed involving the reactive cysteines. Under reducing conditions zinc is bound to the reactive cysteines and the protein is inactive.

The protein resides in the cytoplasm. Redox regulated molecular chaperone. Protects both thermally unfolding and oxidatively damaged proteins from irreversible aggregation. Plays an important role in the bacterial defense system toward oxidative stress. In Streptococcus pyogenes serotype M2 (strain MGAS10270), this protein is 33 kDa chaperonin.